A 1213-amino-acid polypeptide reads, in one-letter code: A disintegrin and metalloproteinase with thrombospondin motifs 2 (1213 aa).

A signal peptide spans 1-28 (MDPPAGAARRLLCPALLLLLLPPPPLLL). Positions 29 to 260 (LPPPPASVRL…INSSRRRVRR (232 aa)) are excised as a propeptide. Residue Asn111 is glycosylated (N-linked (GlcNAc...) asparagine). The interval 211 to 232 (YRRPPTPKPPPVSEPQALDTGV) is disordered. Residues 214-223 (PPTPKPPPVS) show a composition bias toward pro residues. An N-linked (GlcNAc...) asparagine glycan is attached at Asn252. The Peptidase M12B domain occupies 267–471 (YNIEVLLGVD…HSYDCLRDDP (205 aa)). Cystine bridges form between Cys344–Cys393, Cys387–Cys466, Cys426–Cys452, Cys493–Cys518, Cys504–Cys527, Cys513–Cys546, Cys540–Cys551, Cys574–Cys611, Cys578–Cys616, and Cys589–Cys601. His409 is a Zn(2+) binding site. Glu410 is an active-site residue. His413 and His419 together coordinate Zn(2+). One can recognise a Disintegrin domain in the interval 480-560 (PQLPGLHYSM…CIWLTPDILK (81 aa)). A TSP type-1 1 domain is found at 561 to 617 (RDGNWGAWTPFGSCSRTCGTGVKFRTRQCDNPHPANGGRTCSGLAYDFQLCNPQDCP). A Cell attachment site motif is present at residues 692–694 (RGD). Residues 723-851 (CKVVKGTFTR…LNVDDNNVLE (129 aa)) are spacer. 3 consecutive TSP type-1 domains span residues 855 to 913 (VRHE…NPQE), 915 to 975 (SQPV…NREL), and 976 to 1030 (CPGR…APCP). Asn949, Asn950, and Asn994 each carry an N-linked (GlcNAc...) asparagine glycan. Intrachain disulfides connect Cys988–Cys1024, Cys992–Cys1029, and Cys1003–Cys1013. An N-linked (GlcNAc...) asparagine glycan is attached at Asn1032. The region spanning 1060–1098 (SKDQCQGDKSMFCRMEVLSRYCSIPSYNKLCCKSCNPPR) is the PLAC domain. Residues Asn1099, Asn1147, and Asn1152 are each glycosylated (N-linked (GlcNAc...) asparagine).

In terms of assembly, may belong to a multimeric complex. Binds specifically to collagen type XIV. Zn(2+) is required as a cofactor. Post-translationally, the precursor is cleaved by a furin endopeptidase. Glycosylated. Can be O-fucosylated by POFUT2 on a serine or a threonine residue found within the consensus sequence C1-X(2)-(S/T)-C2-G of the TSP type-1 repeat domains where C1 and C2 are the first and second cysteine residue of the repeat, respectively. Fucosylated repeats can then be further glycosylated by the addition of a beta-1,3-glucose residue by the glucosyltransferase, B3GALTL. Fucosylation mediates the efficient secretion of ADAMTS family members. Can also be C-glycosylated with one or two mannose molecules on tryptophan residues within the consensus sequence W-X-X-W of the TPRs, and N-glycosylated. These other glycosylations can also facilitate secretion.

It is found in the secreted. It localises to the extracellular space. Its subcellular location is the extracellular matrix. The catalysed reaction is Cleaves the N-propeptide of collagen chain alpha1(I) at Pro-|-Gln and of alpha1(II) and alpha2(I) at Ala-|-Gln.. Its function is as follows. Cleaves the propeptides of type I and II collagen prior to fibril assembly. Does not act on type III collagen. Cleaves lysyl oxidase LOX at a site downstream of its propeptide cleavage site to produce a short LOX form with reduced collagen-binding activity. This is A disintegrin and metalloproteinase with thrombospondin motifs 2 (Adamts2) from Mus musculus (Mouse).